The sequence spans 634 residues: Kelch-like protein 22 (634 aa).

The residue at position 2 (Ala-2) is an N-acetylalanine. The 68-residue stretch at 50–117 (FDVVLVVEGR…IYTSELELSL (68 aa)) folds into the BTB domain. Kelch repeat units lie at residues 299–349 (CVVG…VLNN), 350–399 (FVYL…VVGR), 400–446 (YIYA…TLEG), 448–493 (MYIT…TLLN), 494–544 (KLYV…VLDN), and 545–593 (RIYV…VLTL). Thr-463 is subject to Phosphothreonine. Tyr-466 is subject to Phosphotyrosine. The residue at position 475 (Thr-475) is a Phosphothreonine. Residues 600-634 (EPPRGTPDRSQADPDFASEVMSVSDWEEFDNSSED) form a disordered region. Phosphothreonine is present on Thr-605. Residues 624–634 (DWEEFDNSSED) show a composition bias toward acidic residues.

In terms of assembly, component of the BCR(KLHL22) E3 ubiquitin ligase complex, at least composed of CUL3, KLHL22 and RBX1. Interacts with PLK1. Interacts with DEPDC5 (via DEP domain); the interaction depends on amino acid availability. Interacts with YWHAE; required for the nuclear localization of KLHL22 upon amino acid starvation.

The protein resides in the cytoplasm. Its subcellular location is the cytosol. It localises to the cytoskeleton. It is found in the microtubule organizing center. The protein localises to the centrosome. The protein resides in the spindle. Its subcellular location is the nucleus. It localises to the lysosome. Its pathway is protein modification; protein ubiquitination. Substrate-specific adapter of a BCR (BTB-CUL3-RBX1) E3 ubiquitin ligase complex required for chromosome alignment and localization of PLK1 at kinetochores. The BCR(KLHL22) ubiquitin ligase complex mediates monoubiquitination of PLK1, leading to PLK1 dissociation from phosphoreceptor proteins and subsequent removal from kinetochores, allowing silencing of the spindle assembly checkpoint (SAC) and chromosome segregation. Monoubiquitination of PLK1 does not lead to PLK1 degradation. The BCR(KLHL22) ubiquitin ligase complex is also responsible for the amino acid-stimulated 'Lys-48' polyubiquitination and proteasomal degradation of DEPDC5. Through the degradation of DEPDC5, releases the GATOR1 complex-mediated inhibition of the TORC1 pathway. It is therefore an amino acid-dependent activator within the amino acid-sensing branch of the TORC1 pathway, indirectly regulating different cellular processes including cell growth and autophagy. The polypeptide is Kelch-like protein 22 (Homo sapiens (Human)).